The sequence spans 571 residues: Urease subunit alpha (571 aa).

Positions 133–571 constitute a Urease domain; sequence GGIDTHVHFI…LPLAQRYFLF (439 aa). His-138, His-140, and Lys-221 together coordinate Ni(2+). Residue Lys-221 is modified to N6-carboxylysine. His-223 is a substrate binding site. Residues His-250 and His-276 each contribute to the Ni(2+) site. His-324 serves as the catalytic Proton donor. Residue Asp-364 participates in Ni(2+) binding.

This sequence belongs to the metallo-dependent hydrolases superfamily. Urease alpha subunit family. Heterotrimer of UreA (gamma), UreB (beta) and UreC (alpha) subunits. Three heterotrimers associate to form the active enzyme. Ni cation is required as a cofactor. Carboxylation allows a single lysine to coordinate two nickel ions.

It localises to the cytoplasm. It catalyses the reaction urea + 2 H2O + H(+) = hydrogencarbonate + 2 NH4(+). It participates in nitrogen metabolism; urea degradation; CO(2) and NH(3) from urea (urease route): step 1/1. This Staphylococcus carnosus (strain TM300) protein is Urease subunit alpha.